The chain runs to 143 residues: D-aminoacyl-tRNA deacylase (143 aa).

Positions 135 to 136 match the Gly-cisPro motif, important for rejection of L-amino acids motif; the sequence is GP.

Belongs to the DTD family. As to quaternary structure, homodimer.

It is found in the cytoplasm. It catalyses the reaction glycyl-tRNA(Ala) + H2O = tRNA(Ala) + glycine + H(+). It carries out the reaction a D-aminoacyl-tRNA + H2O = a tRNA + a D-alpha-amino acid + H(+). Its function is as follows. An aminoacyl-tRNA editing enzyme that deacylates mischarged D-aminoacyl-tRNAs. Also deacylates mischarged glycyl-tRNA(Ala), protecting cells against glycine mischarging by AlaRS. Acts via tRNA-based rather than protein-based catalysis; rejects L-amino acids rather than detecting D-amino acids in the active site. By recycling D-aminoacyl-tRNA to D-amino acids and free tRNA molecules, this enzyme counteracts the toxicity associated with the formation of D-aminoacyl-tRNA entities in vivo and helps enforce protein L-homochirality. This is D-aminoacyl-tRNA deacylase from Mycolicibacterium smegmatis (strain ATCC 700084 / mc(2)155) (Mycobacterium smegmatis).